The chain runs to 63 residues: Ct-IT2 (63 aa).

In terms of domain architecture, LCN-type CS-alpha/beta spans 1–63 (KDGYPMDSKG…VWDKATNKCG (63 aa)). 4 disulfides stabilise this stretch: Cys-11–Cys-62, Cys-15–Cys-36, Cys-22–Cys-43, and Cys-26–Cys-45. Residue Gly-63 is modified to Glycine amide.

As to expression, expressed by the venom gland.

Its subcellular location is the secreted. In terms of biological role, beta toxins bind voltage-independently at site-4 of sodium channels (Nav) and shift the voltage of activation toward more negative potentials thereby affecting sodium channel activation and promoting spontaneous and repetitive firing. Is highly active on insects, since it provokes paralysis and death when injected into crickets. The protein is Ct-IT2 of Centruroides tecomanus (Scorpion).